Reading from the N-terminus, the 126-residue chain is MPTISQLVRKGRKTVASKSTAPALKECPQKRGVCTVVKTTTPKKPNSALRKIARVRLTNGYEVTAYIPGVGHNLQEHSVVLIRGGRVKDLPGVRYHIVRGALDSAGVANRMQGRSKYGAKKPKQKK.

The interval 1 to 23 (MPTISQLVRKGRKTVASKSTAPA) is disordered. Residue aspartate 89 is modified to 3-methylthioaspartic acid.

Belongs to the universal ribosomal protein uS12 family. Part of the 30S ribosomal subunit. Contacts proteins S8 and S17. May interact with IF1 in the 30S initiation complex.

Its function is as follows. With S4 and S5 plays an important role in translational accuracy. Interacts with and stabilizes bases of the 16S rRNA that are involved in tRNA selection in the A site and with the mRNA backbone. Located at the interface of the 30S and 50S subunits, it traverses the body of the 30S subunit contacting proteins on the other side and probably holding the rRNA structure together. The combined cluster of proteins S8, S12 and S17 appears to hold together the shoulder and platform of the 30S subunit. The sequence is that of Small ribosomal subunit protein uS12 from Clostridium perfringens (strain ATCC 13124 / DSM 756 / JCM 1290 / NCIMB 6125 / NCTC 8237 / Type A).